The sequence spans 408 residues: UV excision repair protein RAD23 homolog B (408 aa).

Residues Met-1–Ala-79 enclose the Ubiquitin-like domain. Residues Val-80–Pro-111 are compositionally biased toward low complexity. The interval Val-80 to Leu-176 is disordered. Residues Ala-112–Thr-122 are compositionally biased toward pro residues. Residues Pro-123–Ala-143 show a composition bias toward low complexity. Basic and acidic residues predominate over residues Lys-144 to Val-153. Residues Glu-154–Ser-174 are compositionally biased toward low complexity. 2 positions are modified to phosphothreonine: Thr-155 and Thr-164. The residue at position 174 (Ser-174) is a Phosphoserine. The residue at position 186 (Thr-186) is a Phosphothreonine. Positions Gln-188 to Gly-228 constitute a UBA 1 domain. A Phosphoserine modification is found at Ser-199. Tyr-202 is modified (phosphotyrosine). Residues Gln-236–Pro-274 form a disordered region. The span at Ala-255–Thr-268 shows a compositional bias: low complexity. Residues His-273–Ile-316 enclose the STI1 domain. Positions Pro-363–Gln-403 constitute a UBA 2 domain.

Belongs to the RAD23 family. Component of the XPC complex composed of XPC, RAD23B and CETN2. Interacts with NGLY1 and PSMC1. Interacts with ATXN3. Interacts with PSMD4 and PSMC5. Interacts with AMFR. Interacts with VCP; the interaction is indirect and mediated by NGLY1.

The protein localises to the nucleus. Its subcellular location is the cytoplasm. Functionally, multiubiquitin chain receptor involved in modulation of proteasomal degradation. Binds to polyubiquitin chains. Proposed to be capable to bind simultaneously to the 26S proteasome and to polyubiquitinated substrates and to deliver ubiquitinated proteins to the proteasome. May play a role in endoplasmic reticulum-associated degradation (ERAD) of misfolded glycoproteins by association with PNGase and delivering deglycosylated proteins to the proteasome. Involved in global genome nucleotide excision repair (GG-NER) by acting as component of the XPC complex. Cooperatively with CETN2 appears to stabilize XPC. May protect XPC from proteasomal degradation. Its function is as follows. The XPC complex is proposed to represent the first factor bound at the sites of DNA damage and together with other core recognition factors, XPA, RPA and the TFIIH complex, is part of the pre-incision (or initial recognition) complex. The XPC complex recognizes a wide spectrum of damaged DNA characterized by distortions of the DNA helix such as single-stranded loops, mismatched bubbles or single-stranded overhangs. The orientation of XPC complex binding appears to be crucial for inducing a productive NER. XPC complex is proposed to recognize and to interact with unpaired bases on the undamaged DNA strand which is followed by recruitment of the TFIIH complex and subsequent scanning for lesions in the opposite strand in a 5'-to-3' direction by the NER machinery. Cyclobutane pyrimidine dimers (CPDs) which are formed upon UV-induced DNA damage esacpe detection by the XPC complex due to a low degree of structural perurbation. Instead they are detected by the UV-DDB complex which in turn recruits and cooperates with the XPC complex in the respective DNA repair. In vitro, the XPC:RAD23B dimer is sufficient to initiate NER; it preferentially binds to cisplatin and UV-damaged double-stranded DNA and also binds to a variety of chemically and structurally diverse DNA adducts. XPC:RAD23B contacts DNA both 5' and 3' of a cisplatin lesion with a preference for the 5' side. XPC:RAD23B induces a bend in DNA upon binding. XPC:RAD23B stimulates the activity of DNA glycosylases TDG and SMUG1. This chain is UV excision repair protein RAD23 homolog B (RAD23B), found in Bos taurus (Bovine).